The following is an 88-amino-acid chain: Small ribosomal subunit protein uS17 (88 aa).

The protein belongs to the universal ribosomal protein uS17 family. In terms of assembly, part of the 30S ribosomal subunit.

Its function is as follows. One of the primary rRNA binding proteins, it binds specifically to the 5'-end of 16S ribosomal RNA. The sequence is that of Small ribosomal subunit protein uS17 from Levilactobacillus brevis (strain ATCC 367 / BCRC 12310 / CIP 105137 / JCM 1170 / LMG 11437 / NCIMB 947 / NCTC 947) (Lactobacillus brevis).